The following is a 253-amino-acid chain: MICOS complex subunit mic25-b (253 aa).

Gly-2 carries N-myristoyl glycine lipidation. The tract at residues 38 to 82 is disordered; that stretch reads KDQSTWAASGAASGSATVPSKVGSSASHPAAASKDGAHKPTAAGV. Residues 44–53 show a composition bias toward low complexity; it reads AASGAASGSA. A coiled-coil region spans residues 87 to 116; that stretch reads AEEDLYRRYEREQTLIQEELARLAKREKDA. The region spanning 206 to 248 is the CHCH domain; it reads DPVCMDLQSNILKCYAENKQERLNCSDLAKEYQKCVSAAQKNL. 2 consecutive short sequence motifs (cx9C motif) follow at residues 209-219 and 230-240; these read CMDLQSNILKC and CSDLAKEYQKC. 2 disulfides stabilise this stretch: Cys-209–Cys-240 and Cys-219–Cys-230.

It belongs to the MICOS complex subunit Mic19 family. Metazoan Mic25 subfamily. Component of the mitochondrial contact site and cristae organizing system (MICOS) complex (also known as MINOS or MitOS complex).

It is found in the mitochondrion inner membrane. Functionally, component of the MICOS complex, a large protein complex of the mitochondrial inner membrane that plays crucial roles in the maintenance of crista junctions, inner membrane architecture, and formation of contact sites to the outer membrane. The protein is MICOS complex subunit mic25-b (chchd6-b) of Xenopus laevis (African clawed frog).